The primary structure comprises 262 residues: Large ribosomal subunit protein eL8B (262 aa).

Residues 1 to 36 (MAPKGKKVAPAPLATKSAKSSESKNPLFESTPKNFG) are disordered.

It belongs to the eukaryotic ribosomal protein eL8 family. As to quaternary structure, component of the large ribosomal subunit. Mature ribosomes consist of a small (40S) and a large (60S) subunit. The 40S subunit contains about 32 different proteins and 1 molecule of RNA (18S). The 60S subunit contains 45 different proteins and 3 molecules of RNA (25S, 5.8S and 5S).

Its subcellular location is the cytoplasm. Functionally, component of the ribosome, a large ribonucleoprotein complex responsible for the synthesis of proteins in the cell. The small ribosomal subunit (SSU) binds messenger RNAs (mRNAs) and translates the encoded message by selecting cognate aminoacyl-transfer RNA (tRNA) molecules. The large subunit (LSU) contains the ribosomal catalytic site termed the peptidyl transferase center (PTC), which catalyzes the formation of peptide bonds, thereby polymerizing the amino acids delivered by tRNAs into a polypeptide chain. The nascent polypeptides leave the ribosome through a tunnel in the LSU and interact with protein factors that function in enzymatic processing, targeting, and the membrane insertion of nascent chains at the exit of the ribosomal tunnel. This chain is Large ribosomal subunit protein eL8B, found in Candida albicans (strain SC5314 / ATCC MYA-2876) (Yeast).